The chain runs to 111 residues: Ribonuclease P protein component (111 aa).

It belongs to the RnpA family. In terms of assembly, consists of a catalytic RNA component (M1 or rnpB) and a protein subunit.

The catalysed reaction is Endonucleolytic cleavage of RNA, removing 5'-extranucleotides from tRNA precursor.. Its function is as follows. RNaseP catalyzes the removal of the 5'-leader sequence from pre-tRNA to produce the mature 5'-terminus. It can also cleave other RNA substrates such as 4.5S RNA. The protein component plays an auxiliary but essential role in vivo by binding to the 5'-leader sequence and broadening the substrate specificity of the ribozyme. This is Ribonuclease P protein component from Streptococcus thermophilus (strain CNRZ 1066).